The chain runs to 339 residues: tRNA N6-adenosine threonylcarbamoyltransferase (339 aa).

The Fe cation site is built by histidine 111 and histidine 115. Substrate contacts are provided by residues 139 to 143 (LVSGG), aspartate 172, glycine 185, aspartate 189, and asparagine 280. Aspartate 308 contributes to the Fe cation binding site.

The protein belongs to the KAE1 / TsaD family. Fe(2+) serves as cofactor.

Its subcellular location is the cytoplasm. The enzyme catalyses L-threonylcarbamoyladenylate + adenosine(37) in tRNA = N(6)-L-threonylcarbamoyladenosine(37) in tRNA + AMP + H(+). Its function is as follows. Required for the formation of a threonylcarbamoyl group on adenosine at position 37 (t(6)A37) in tRNAs that read codons beginning with adenine. Is involved in the transfer of the threonylcarbamoyl moiety of threonylcarbamoyl-AMP (TC-AMP) to the N6 group of A37, together with TsaE and TsaB. TsaD likely plays a direct catalytic role in this reaction. The protein is tRNA N6-adenosine threonylcarbamoyltransferase of Bacteroides thetaiotaomicron (strain ATCC 29148 / DSM 2079 / JCM 5827 / CCUG 10774 / NCTC 10582 / VPI-5482 / E50).